Consider the following 304-residue polypeptide: Ribosomal RNA large subunit methyltransferase F (304 aa).

The protein belongs to the methyltransferase superfamily. METTL16/RlmF family.

The protein localises to the cytoplasm. It catalyses the reaction adenosine(1618) in 23S rRNA + S-adenosyl-L-methionine = N(6)-methyladenosine(1618) in 23S rRNA + S-adenosyl-L-homocysteine + H(+). Specifically methylates the adenine in position 1618 of 23S rRNA. This chain is Ribosomal RNA large subunit methyltransferase F, found in Klebsiella pneumoniae (strain 342).